A 422-amino-acid chain; its full sequence is Ornithine decarboxylase (422 aa).

Position 71 is an N6-(pyridoxal phosphate)lysine (lysine 71). Pyridoxal 5'-phosphate contacts are provided by residues serine 203, glycine 240, and 275-278; that span reads EPGR. 331–332 is a substrate binding site; it reads FD. Cysteine 359 (proton donor; shared with dimeric partner) is an active-site residue. Aspartate 360 contacts substrate. A pyridoxal 5'-phosphate-binding site is contributed by tyrosine 388.

It belongs to the Orn/Lys/Arg decarboxylase class-II family. As to quaternary structure, homodimer. Only the dimer is catalytically active, as the active sites are constructed of residues from both monomers. Requires pyridoxal 5'-phosphate as cofactor.

It catalyses the reaction L-ornithine + H(+) = putrescine + CO2. It functions in the pathway amine and polyamine biosynthesis; putrescine biosynthesis via L-ornithine pathway; putrescine from L-ornithine: step 1/1. Inhibited by antizyme (AZ) in response to polyamine levels. AZ inhibits the assembly of the functional homodimer by binding to ODC monomers and targeting them for ubiquitin-independent proteolytic destruction by the 26S proteasome. Catalyzes the first and rate-limiting step of polyamine biosynthesis that converts ornithine into putrescine, which is the precursor for the polyamines, spermidine and spermine. Polyamines are essential for cell proliferation and are implicated in cellular processes, ranging from DNA replication to apoptosis. The polypeptide is Ornithine decarboxylase (Caenorhabditis elegans).